The sequence spans 270 residues: Cyclic pyranopterin monophosphate synthase, mitochondrial (270 aa).

The N-terminal 32 residues, 1–32 (MISTLRRAVFLRRFPAVVSPIKRAFSSRIDDE), are a transit peptide targeting the mitochondrion. Substrate contacts are provided by residues 187-189 (LCH) and 225-226 (ME). D240 is an active-site residue.

It belongs to the MoaC family. Homohexamer. As to expression, abundantly expressed in the roots.

It localises to the mitochondrion matrix. It catalyses the reaction (8S)-3',8-cyclo-7,8-dihydroguanosine 5'-triphosphate = cyclic pyranopterin phosphate + diphosphate. Its pathway is cofactor biosynthesis; molybdopterin biosynthesis. Catalyzes the conversion of (8S)-3',8-cyclo-7,8-dihydroguanosine 5'-triphosphate to cyclic pyranopterin monophosphate (cPMP). The chain is Cyclic pyranopterin monophosphate synthase, mitochondrial (CNX3) from Arabidopsis thaliana (Mouse-ear cress).